We begin with the raw amino-acid sequence, 272 residues long: 2-amino-3,7-dideoxy-D-threo-hept-6-ulosonate synthase (272 aa).

Aspartate 33 (proton acceptor) is an active-site residue. 1-deoxy-D-threo-hexo-2,5-diulose 6-phosphate is bound by residues 33-37 (DHGVS) and 153-155 (YPR). Catalysis depends on tyrosine 153, which acts as the Proton donor. Lysine 184 acts as the Schiff-base intermediate with substrate in catalysis. Residues 209-210 (GG) and 237-238 (GR) contribute to the 1-deoxy-D-threo-hexo-2,5-diulose 6-phosphate site.

The protein belongs to the DeoC/FbaB aldolase family. ADHS subfamily. In terms of assembly, homodecamer.

It carries out the reaction 1-deoxy-D-threo-hexo-2,5-diulose 6-phosphate + L-aspartate 4-semialdehyde = 2,3-dioxopropyl phosphate + 2-amino-2,3,7-trideoxy-D-lyxo-hept-6-ulosonate. Catalyzes a transaldol reaction between 6-deoxy-5-ketofructose 1-phosphate (DKFP) and L-aspartate semialdehyde (ASA) with an elimination of hydroxypyruvaldehyde phosphate to yield 2-amino-3,7-dideoxy-D-threo-hept-6-ulosonate (ADH). Plays a key role in an alternative pathway of the biosynthesis of 3-dehydroquinate (DHQ), which is involved in the canonical pathway for the biosynthesis of aromatic amino acids. This is 2-amino-3,7-dideoxy-D-threo-hept-6-ulosonate synthase from Methanococcus maripaludis (strain C7 / ATCC BAA-1331).